A 253-amino-acid chain; its full sequence is Protein C1orf43 (253 aa).

Residues 11–31 traverse the membrane as a helical segment; sequence VNVVLVMAYGSLVFVLLFIFV.

Its subcellular location is the membrane. It is found in the golgi apparatus. The protein localises to the mitochondrion. In terms of biological role, general regulator of phagocytosis. Required to uptake Gram negative bacterium by macrophages. The protein is Protein C1orf43 (C1orf43) of Homo sapiens (Human).